A 39-amino-acid chain; its full sequence is Bacteriocin lactococcin-G subunit alpha (39 aa).

In terms of assembly, bacteriocin activity requires interaction of alpha and beta peptides in a molar ratio of 7:1 or 8:1 respectively.

Functionally, kills Lactococci. The sequence is that of Bacteriocin lactococcin-G subunit alpha from Lactococcus lactis subsp. lactis (Streptococcus lactis).